A 327-amino-acid polypeptide reads, in one-letter code: Mycothiol acetyltransferase (327 aa).

N-acetyltransferase domains follow at residues 11-159 (EPHG…VTLP) and 162-327 (VQIR…EGTS). Glutamate 42 is a 1D-myo-inositol 2-(L-cysteinylamino)-2-deoxy-alpha-D-glucopyranoside binding site. 89 to 91 (LVI) serves as a coordination point for acetyl-CoA. Positions 189, 228, and 251 each coordinate 1D-myo-inositol 2-(L-cysteinylamino)-2-deoxy-alpha-D-glucopyranoside. Residues 255–257 (LGV) and 262–268 (QGLGLGR) contribute to the acetyl-CoA site. 1D-myo-inositol 2-(L-cysteinylamino)-2-deoxy-alpha-D-glucopyranoside is bound at residue tyrosine 289. 294–299 (NAPAIR) lines the acetyl-CoA pocket.

It belongs to the acetyltransferase family. MshD subfamily. In terms of assembly, monomer.

The catalysed reaction is 1D-myo-inositol 2-(L-cysteinylamino)-2-deoxy-alpha-D-glucopyranoside + acetyl-CoA = mycothiol + CoA + H(+). Functionally, catalyzes the transfer of acetyl from acetyl-CoA to desacetylmycothiol (Cys-GlcN-Ins) to form mycothiol. The chain is Mycothiol acetyltransferase from Acidothermus cellulolyticus (strain ATCC 43068 / DSM 8971 / 11B).